The chain runs to 352 residues: tRNA pseudouridine synthase D (352 aa).

The Nucleophile role is filled by Asp81. The TRUD domain maps to 157–303; the sequence is GIPNYFGAQR…MSHERRILRL (147 aa).

This sequence belongs to the pseudouridine synthase TruD family.

The catalysed reaction is uridine(13) in tRNA = pseudouridine(13) in tRNA. Functionally, responsible for synthesis of pseudouridine from uracil-13 in transfer RNAs. This Pseudomonas fluorescens (strain Pf0-1) protein is tRNA pseudouridine synthase D.